Reading from the N-terminus, the 1249-residue chain is MEEVITIAQIVHRGTDILSLNNEEIEALVDEIYSTLKGSNDIKNIRLIDFLFTLKDFVNHVRAEQSKLPDLSMPMEAYIRQLLVDSDVVPIVSEKKKELRVRPSTRKEIFLINGTHLAVPAEAPIEIYGLKLRLKTFSPQCFMRMAEIGSFSPETLGYVASGANLTNFIRVFMKCVDQETWKKNGEGVVVTTKENIIQFTHQYIELYKFLRSGGHSWLINRLAEEMVHRKLDREDQGSHISNIVETEEIEPEENIKRVIFFLKELSTMYSVSPVFTSGYMPLLYDLYRAGYLEVLWNPVEQKFLQHAEQREKEQMILQQVDMKLMEVTTQARQYFKIMEEKIGRVQSDAIREILTMEGKVDDPNSILQEVIKACGKQEAELITTEYLNIKKQWELQEKNACAHLKLVKQLRSGLQYAESLKVLESIRVLYKEKNNTTNWNLCKACGFKLLCPHVDMLIQLQAAEASYDTMRTKLMKFSGINKEKENNQGLIYSYFCKICGEELAHFIQEDRTADVGVIGDLNSKLRIFIWQETMKACTFIHFGKLVDVKQFANIAVNVCLPLVYSIENIKKEEDYDPLTQLYAVIYIYAYILNLIYSSQKNKEFLTITIHGMKADSSLNAYVTFLLEKMMQQYSGIINQLSEITDQWIANNFREAFKKIIHQNGLQGLSVQDDTKVLLTEILLDPMYDYAATVARIDGSIPMHKPRTPKEAEYEFKTVIGRTPAELLSQKEFYDKIYTSKYRPDFTQLARLKDIYFQEESLRVWWGGRDEEKTSTLIYLRAYELFLKYLQNAPNFNSELAEFKTYENAYGEQKALLAQQGFYNIFDPNTGRADQRTRLFEYKRLPISTLYDERGLPHKWTIYVYKAVDSSQKPTEIEVTRKDVIKKIDNHYALADLRCSVCHVLQHEVGQLNIKKVQTALKASLEFNTFYAFYESRCPKGGLHDFQDKKCVKCGLFTYIIYDHLSQPELVHDYYNNYKDQYDKEKMSIRSIQIKKDMTMPSTETQPKPPQEPWTFDYGKIIKTAKILDISPAVIEAIGAMEGRSYADIREGQGAPPPPTSMDDPRLMAVDSAVRIFLYNYNCLRHVSTFNKPPMHVERLVKHLSYEEKEDLEKVLPNVVNEYHTTFKHLRVTDPASALLYSIEFLCISFLTLYDIKEPSWVVNIVREFALTELNTIIQSEKLLSKPGAFNFMIFGEDFVCSGEDSSMDDISAYSSPGLFGEDIIDRLDDPFSIEDVDISLDVLDNLAPQ.

This sequence belongs to the asfivirus M1249L family. As to quaternary structure, interacts with the minor capsid protein p17 and with the hexon capsid protein p72 capsomers; these interactions form a rigid zipper structure that stabilizes the capsomers. Interacts with host IRF3.

Its subcellular location is the virion. It localises to the host cytoplasm. Its function is as follows. Together with the penton and the other minor capsid proteins (p17, p49), forms a complicated network immediately below the outer capsid shell, stabilizing the whole capsid. In addition, blocks IFN-beta transactivation mediated by the cGAS-STING pathway and regulates the transcriptional activity of IFN-beta. Mechanistically, suppresses the phosphorylation of host key adapter protein TBK1 and degrades host IRF3 in the cytoplasm. In Ornithodoros (relapsing fever ticks), this protein is Minor capsid protein M1249L.